Reading from the N-terminus, the 241-residue chain is Octanoyltransferase (241 aa).

The 186-residue stretch at 43 to 228 (ADTPDEIWLV…RLTANLDGSP (186 aa)) folds into the BPL/LPL catalytic domain. Substrate contacts are provided by residues 83–90 (RGGQITYH), 159–161 (ALG), and 172–174 (GVS). Residue C190 is the Acyl-thioester intermediate of the active site.

The protein belongs to the LipB family.

The protein localises to the cytoplasm. It catalyses the reaction octanoyl-[ACP] + L-lysyl-[protein] = N(6)-octanoyl-L-lysyl-[protein] + holo-[ACP] + H(+). It functions in the pathway protein modification; protein lipoylation via endogenous pathway; protein N(6)-(lipoyl)lysine from octanoyl-[acyl-carrier-protein]: step 1/2. Its function is as follows. Catalyzes the transfer of endogenously produced octanoic acid from octanoyl-acyl-carrier-protein onto the lipoyl domains of lipoate-dependent enzymes. Lipoyl-ACP can also act as a substrate although octanoyl-ACP is likely to be the physiological substrate. This is Octanoyltransferase from Paraburkholderia phytofirmans (strain DSM 17436 / LMG 22146 / PsJN) (Burkholderia phytofirmans).